A 330-amino-acid polypeptide reads, in one-letter code: (11Z)-hexadec-11-enoyl-CoA conjugase (330 aa).

2 consecutive transmembrane segments (helical) span residues 37–57 and 65–85; these read IVVMNVIRFSYLHIAGLYGLY and LATSVFAIVLFFLGNFGITAG. Residues 87–92 carry the Histidine box-1 motif; that stretch reads HRLWSH. A helical membrane pass occupies residues 101–121; the sequence is LEILLMVFNSIAFQNTIFTWV. The Histidine box-2 motif lies at 124–128; that stretch reads HRLHH. A run of 2 helical transmembrane segments spans residues 185-205 and 216-238; these read AIPFIGTICFIIPTLAPMYFW and TVLRYIFSLNGTFLVNSAAHLWG. The short motif at 264–268 is the Histidine box-3 element; the sequence is HNYHH.

It belongs to the fatty acid desaturase type 1 family. It depends on Fe(2+) as a cofactor. As to expression, highly expressed in the pheromone gland.

Its subcellular location is the membrane. It catalyses the reaction an 11,12-saturated fatty acyl-CoA + 2 Fe(II)-[cytochrome b5] + O2 + 2 H(+) = an (11Z)-Delta(11)-fatty acyl-CoA + 2 Fe(III)-[cytochrome b5] + 2 H2O. The enzyme catalyses (11Z)-hexadecenoyl-CoA + AH2 + O2 = (10E,12Z)-hexadecadienoyl-CoA + A + 2 H2O. Fatty acid desaturase that catalyzes 2 consecutive steps in the biosynthesis of bombykol, a sex pheromone produced by the moth. First acts as an acyl-CoA Delta(11) desaturase (1) by catalyzing the formation of Delta(11) fatty acyl precursors. Then acts as a (11Z)-hexadec-11-enoyl-CoA conjugase (2) by converting a single cis double bond at position 11 of (11Z)-hexadec-11-enoyl-CoA into conjugated 10 trans and 12 cis double bonds. This is (11Z)-hexadec-11-enoyl-CoA conjugase from Bombyx mori (Silk moth).